The chain runs to 350 residues: Nuclear pore complex-interacting protein family member A1 (350 aa).

The tract at residues 306–325 is disordered; it reads KTPPECLLTPLPPSAPPSVD.

The protein belongs to the NPIP family. As to quaternary structure, may associate with the nuclear pore complex. In terms of tissue distribution, widely expressed.

The protein localises to the nucleus. The protein resides in the nuclear pore complex. Its subcellular location is the nucleus membrane. The chain is Nuclear pore complex-interacting protein family member A1 (NPIPA1) from Homo sapiens (Human).